The sequence spans 918 residues: Band 3 anion exchange protein (918 aa).

A disordered region spans residues 1–48; that stretch reads MENDLSFGEDVMSYEEESDSAFPSPIRPTPPGHSGNYDLEQSRQEEDS. Residues 1 to 392 are Cytoplasmic-facing; that stretch reads MENDLSFGED…ISDFTDALDP (392 aa). The chain crosses the membrane as a helical span at residues 393-416; that stretch reads QVLAAVIFIYFAALSPAITFGGLL. At 417–424 the chain is on the extracellular side; the sequence is ADKTEHMM. A helical membrane pass occupies residues 425–445; the sequence is GVSELMISTCVQGIIFAFIAA. Topologically, residues 446 to 448 are cytoplasmic; the sequence is QPT. The discontinuously helical transmembrane segment at 449–465 threads the bilayer; it reads LVIGFSGPLLVFEEAFF. Over 466 to 474 the chain is Extracellular; that stretch reads AFCKSQEIE. A helical transmembrane segment spans residues 475–495; it reads YIVGRIWVGLWLVIIVVVIVA. Residues 496-507 lie on the Cytoplasmic side of the membrane; it reads VEGSFLVKFISR. The chain crosses the membrane as a helical span at residues 508–530; sequence FTQEIFSILISLIFIYETFSKLG. Residues 531 to 583 are Extracellular-facing; it reads KIFKAHPLVLNYEHLNDSLDNPFHPVVKEHIEYHEDGNKTVHEVIHERAYPNT. N-linked (GlcNAc...) asparagine glycans are attached at residues Asn-546 and Asn-568. A helical membrane pass occupies residues 584 to 604; that stretch reads ALLSMCLMFGCFFIAYFLRQF. The Cytoplasmic portion of the chain corresponds to 605–615; sequence KNGHFLPGPIR. A helical membrane pass occupies residues 616 to 636; sequence RMIGDFGVPIAIFFMIAVDIT. At 637–676 the chain is on the extracellular side; the sequence is IEDAYTQKLVVPKGLMVSNPNARGWFINPLGEKKPFPAWM. The chain crosses the membrane as a helical span at residues 677–697; that stretch reads MGACCVPALLVFILIFLESQI. At 698 to 713 the chain is on the cytoplasmic side; that stretch reads TTLIVSKPERKMVKGS. The helical transmembrane segment at 714–732 threads the bilayer; sequence GFHLDLLILVTMGGIASLF. Residues 733–750 form a discontinuously helical membrane-spanning segment; sequence GVPWLSAATVRSVTHANA. At 751–769 the chain is on the cytoplasmic side; it reads LTVMSKGPKPEIEKVLEQR. The next 2 helical transmembrane spans lie at 770–790 and 791–809; these read ISGM…PILK and MIPM…ITSL. The Cytoplasmic segment spans residues 810 to 847; sequence SGIQMWDRMLLLIVPRKYYPADAYAQRVTTMKMHLFTL. An intramembrane region (discontinuously helical) is located at residues 848-878; that stretch reads IQMVCLGALWMVKMSAFSLALPFVLILTIPL. Cys-852 is lipidated: S-palmitoyl cysteine. Over 879-918 the chain is Cytoplasmic; it reads RMAITGTLFTDKEMKCLDASDGKVKFEEEPGEDMYESPLP.

The protein belongs to the anion exchanger (TC 2.A.31) family. A dimer in solution, it spans the membrane asymmetrically and appears to be tetrameric.

Its subcellular location is the cell membrane. It catalyses the reaction hydrogencarbonate(in) + chloride(out) = hydrogencarbonate(out) + chloride(in). Functionally, functions both as a transporter that mediates electroneutral anion exchange across the cell membrane and as a structural protein. Major integral membrane glycoprotein of the erythrocyte membrane; required for normal flexibility and stability of the erythrocyte membrane and for normal erythrocyte shape via the interactions of its cytoplasmic domain with cytoskeletal proteins, glycolytic enzymes, and hemoglobin. Functions as a transporter that mediates the 1:1 exchange of inorganic anions across the erythrocyte membrane. Mediates chloride-bicarbonate exchange in the kidney, and is required for normal acidification of the urine. The polypeptide is Band 3 anion exchange protein (slc4a1) (Oncorhynchus mykiss (Rainbow trout)).